A 317-amino-acid polypeptide reads, in one-letter code: Glycine--tRNA ligase alpha subunit (317 aa).

It belongs to the class-II aminoacyl-tRNA synthetase family. In terms of assembly, tetramer of two alpha and two beta subunits.

The protein resides in the cytoplasm. It carries out the reaction tRNA(Gly) + glycine + ATP = glycyl-tRNA(Gly) + AMP + diphosphate. This Acidovorax ebreus (strain TPSY) (Diaphorobacter sp. (strain TPSY)) protein is Glycine--tRNA ligase alpha subunit.